The sequence spans 1386 residues: DNA-directed RNA polymerase subunit beta'' (1386 aa).

Cysteine 224, cysteine 294, cysteine 301, and cysteine 304 together coordinate Zn(2+).

It belongs to the RNA polymerase beta' chain family. RpoC2 subfamily. In terms of assembly, in plastids the minimal PEP RNA polymerase catalytic core is composed of four subunits: alpha, beta, beta', and beta''. When a (nuclear-encoded) sigma factor is associated with the core the holoenzyme is formed, which can initiate transcription. The cofactor is Zn(2+).

It localises to the plastid. It is found in the chloroplast. It carries out the reaction RNA(n) + a ribonucleoside 5'-triphosphate = RNA(n+1) + diphosphate. DNA-dependent RNA polymerase catalyzes the transcription of DNA into RNA using the four ribonucleoside triphosphates as substrates. In Acorus calamus (Sweet flag), this protein is DNA-directed RNA polymerase subunit beta''.